Reading from the N-terminus, the 1409-residue chain is MEDYFSFFDKPKDPLHFSAIRISVSSPEKIRERSHGEVKKPETINYRTFKPERDGLFCAKIFGPTKDYECNCGKYKRMKHRGIICEKCGVEVIPSKVRRERLGHIDLATPVAHIWFLKSLPSRIGNLLDITLKDLEKVLYFEAFVISDPKNSPLQFCEVMSEDKFLKAQQEYGYDAFSGGMGAEAIRECLKAIDLDELSGQLRTEMMESTSEAKRKKTAKRLKVLEAFKSSGNKPEWMILECIPVLPPELRPLVPLDGGRFATSDLNDLYRRVINRNNRLKRLVELQAPEVIIRNEKRMLQEAVDALFDNGRRGRAIAGPNKRPLKSLSDMLKGKSGRFRQNLLGKRVDYSGRSVIVVGPELKLHQCGLPKKMALELFKPFIYNKLEERGYVTTIKSAKKMVEKERPEVWDVLEEVIREHPVMLNRAPTLHRLGIQAFEPVLIEGKAIQLHPLVCTAFNADFDGDQMAVHLPLSVESQVEARVLMMSTNNILSPAHGKPIIVPSQDMVLGAYYMTRDRRFERVIDETTGKEKIDAESGLPIYRKVKGTGKVFSGPDEVRIAFDAGEVDMQATVKVRMKNLVSDEKPQMIDTTVGRVILKEILPDSVPFSAVNKVMNKKELSNLVDTCYRMADNKETVILADKLKDIGFRYANLAGISICLDDMVIPEGKTEILTKAEDEVKEIQNQYTEGLITDGERYNKVIDIWAKATEDIAKEMLDNLSKEKFFVEGVGVSEEASFNAIHMMADSGARGSHQQIRQLAGMRGLMAKPSGEIIETPITANFREGLTVLQYFISTHGARKGLADTALKTANSGYLTRRLVDVAQDAIIAEEDCGTLDGLVVSSLTEGGEVIEHIGDRILGRVALDDILDPITGDVLVAANEDIDENLVKRIEDAGLEKVKIRSVLTCQSRRGICSKCYGRDLARGHSVNMGEAVGVIAAQSIGEPGTQLTMRTFHIGGTASRRAEQTSLESRTDGILKFINLNTVINAEGHHIVMNRNGEIAVVDETGREREKYLVLYGAKIKIAPGGAVTQGGILAEWDPYTMPILTEFSGKVKFGDIVEGVTMEEQLDEVTGLSRKVIIESKDSDKRPRIAIKGMGGDSADAVTGTIGRYFLPVGANITVQDDSVISAGDIIAKIPRETTKTKDITGGLPRVAELFEARKPKDFAVISEIDGRVSYGKDAKGKRKVIVTPEMGEPKEYLIPKGKHISVHEGDHVRAGEPLMDGSSNPHDILRVLGVKELAKYLVDEVQEVYRLQGVKINDKHIEVIVRQMLRRVRIKDVGDTSLLVDDQVERWVFETENQKVMNEGKRPAIAEPLLLGITKASLSTESFISAASFQETTKVLTQAAIEGKVDYLRGLKENVIMGRLIPAGTGLSSYRNIRMLTEASEPVAQAAESEDVPDVSQQEAA.

Residues C70, C72, C85, and C88 each coordinate Zn(2+). The Mg(2+) site is built by D461, D463, and D465. C833, C907, C914, and C917 together coordinate Zn(2+). The disordered stretch occupies residues E1389–A1409.

This sequence belongs to the RNA polymerase beta' chain family. As to quaternary structure, the RNAP catalytic core consists of 2 alpha, 1 beta, 1 beta' and 1 omega subunit. When a sigma factor is associated with the core the holoenzyme is formed, which can initiate transcription. Mg(2+) serves as cofactor. The cofactor is Zn(2+).

The enzyme catalyses RNA(n) + a ribonucleoside 5'-triphosphate = RNA(n+1) + diphosphate. DNA-dependent RNA polymerase catalyzes the transcription of DNA into RNA using the four ribonucleoside triphosphates as substrates. This is DNA-directed RNA polymerase subunit beta' from Pelobacter propionicus (strain DSM 2379 / NBRC 103807 / OttBd1).